A 204-amino-acid chain; its full sequence is Guanylate kinase (204 aa).

The region spanning 18–196 (PKLFTISAPA…SYEILKSIFI (179 aa)) is the Guanylate kinase-like domain. ATP is bound at residue 25-32 (APAGAGKT).

This sequence belongs to the guanylate kinase family.

It is found in the cytoplasm. It catalyses the reaction GMP + ATP = GDP + ADP. Its function is as follows. Essential for recycling GMP and indirectly, cGMP. The protein is Guanylate kinase of Chlamydia caviae (strain ATCC VR-813 / DSM 19441 / 03DC25 / GPIC) (Chlamydophila caviae).